Consider the following 92-residue polypeptide: uncharacterized protein (92 aa).

The interval methionine 1–alanine 92 is disordered.

This is an uncharacterized protein from Caenorhabditis elegans.